Reading from the N-terminus, the 210-residue chain is Syntaxin-binding protein 6 (210 aa).

Ser2 carries the N-acetylserine modification. The v-SNARE coiled-coil homology domain maps to 151–210 (GNSILHSAADSVTSAVQKASQALNERGERLGRAEEKTEDLKNSAQQFAETAHKLAMKHKC).

Part of a ternary complex containing SNAP25 and STX1A that can be dissociated by NAPA and NSF. Interacts with STX4A. In terms of tissue distribution, detected at low levels in brain, and at very low levels in heart, adrenal gland, testis, liver and kidney.

The protein resides in the cytoplasm. The protein localises to the membrane. In terms of biological role, forms non-fusogenic complexes with SNAP25 and STX1A and may thereby modulate the formation of functional SNARE complexes and exocytosis. The sequence is that of Syntaxin-binding protein 6 (STXBP6) from Homo sapiens (Human).